We begin with the raw amino-acid sequence, 47 residues long: Photosystem II reaction center protein K (47 aa).

Positions 1–10 (MAAFTLDLMA) are excised as a propeptide. A helical membrane pass occupies residues 20 to 40 (APAVDVLPLIPIFFFLLVFVW).

It belongs to the PsbK family. PSII is composed of 1 copy each of membrane proteins PsbA, PsbB, PsbC, PsbD, PsbE, PsbF, PsbH, PsbI, PsbJ, PsbK, PsbL, PsbM, PsbT, PsbX, PsbY, Psb30/Ycf12, peripheral proteins PsbO, CyanoQ (PsbQ), PsbU, PsbV and a large number of cofactors. It forms dimeric complexes.

The protein localises to the cellular thylakoid membrane. Functionally, one of the components of the core complex of photosystem II (PSII). PSII is a light-driven water:plastoquinone oxidoreductase that uses light energy to abstract electrons from H(2)O, generating O(2) and a proton gradient subsequently used for ATP formation. It consists of a core antenna complex that captures photons, and an electron transfer chain that converts photonic excitation into a charge separation. The chain is Photosystem II reaction center protein K from Prochlorococcus marinus (strain MIT 9303).